Here is a 998-residue protein sequence, read N- to C-terminus: Protein Smaug (998 aa).

The span at 1 to 37 (MKYATGTDNAMTSGISGQTNNSNSASNEMQPTTSTPT) shows a compositional bias: polar residues. 3 disordered regions span residues 1-45 (MKYA…EATS), 50-69 (TATY…QSQP), and 329-370 (LCPA…GSSS). Positions 329–338 (LCPASGSRSS) are enriched in low complexity. A phosphoserine mark is found at Ser-564 and Ser-575. The interaction with cup stretch occupies residues 583–763 (EFKPNYIKFH…KDLKFKLSKM (181 aa)). The SAM domain maps to 600–654 (GIGLWLKSLRLHKYIELFKNMTYEEMLLITEDFLQSVGVTKGASHKLALCIDKLK). Disordered stretches follow at residues 773-892 (HVKP…MQQM) and 942-977 (NNGS…QQPK). Composition is skewed to polar residues over residues 801-822 (KSGS…NFSL) and 854-864 (HQPQYKSSSYP). Ser-971 carries the post-translational modification Phosphoserine.

It belongs to the SMAUG family. Interacts with oskar (osk). Binds to the 3'-UTR of nos. Interacts with cup, which in turn recruits eIF4-E, leading to an indirect interaction between smg and eIF4-E that prevents mRNA translation.

It localises to the cytoplasm. Translation regulator that binds to the 3'-UTR of specific mRNAs such as nanos (nos) and prevent their translation. Prevents translation of unlocalized nos in the bulk cytoplasm via the recruitment of cup. The sequence is that of Protein Smaug from Drosophila simulans (Fruit fly).